The primary structure comprises 199 residues: Charged multivesicular body protein 1b (199 aa).

Coiled coils occupy residues 10 to 30 (NLKFAAKELQRNSKKCDKEEK) and 178 to 199 (TSVASAEQDELSQRLAKLRDQV). The segment at 167–199 (ELPQGQTGSVGTSVASAEQDELSQRLAKLRDQV) is disordered. Residues 170 to 182 (QGQTGSVGTSVAS) show a composition bias toward polar residues. The MIT-interacting motif signature appears at 186–196 (DELSQRLAKLR).

Belongs to the SNF7 family. Probable peripherally associated component of the endosomal sorting required for transport complex III (ESCRT-III).

The protein localises to the cytoplasm. It localises to the cytosol. Its subcellular location is the endosome. It is found in the late endosome membrane. Its function is as follows. Probable peripherally associated component of the endosomal sorting required for transport complex III (ESCRT-III) which is involved in multivesicular bodies (MVBs) formation and sorting of endosomal cargo proteins into MVBs. MVBs contain intraluminal vesicles (ILVs) that are generated by invagination and scission from the limiting membrane of the endosome and mostly are delivered to lysosomes enabling degradation of membrane proteins, such as stimulated growth factor receptors, lysosomal enzymes and lipids. In Danio rerio (Zebrafish), this protein is Charged multivesicular body protein 1b (chmp1b).